The chain runs to 316 residues: Probable inactive poly [ADP-ribose] polymerase SRO4 (316 aa).

A disordered region spans residues 1–28 (MDYSKTEETPINEEQGSTNSSESRSNEE). Residues 14 to 23 (EQGSTNSSES) show a composition bias toward low complexity. One can recognise a PARP catalytic domain in the interval 28-255 (ELFSDCDQQH…KSPWISFPVL (228 aa)). Residues 243–314 (KNPKSPWISF…IKSVGQKVHK (72 aa)) enclose the RST domain.

It localises to the nucleus. Functionally, probable inactive ADP-ribosyltransferase that may be involved in stress and developmental responses. This is Probable inactive poly [ADP-ribose] polymerase SRO4 (SRO4) from Arabidopsis thaliana (Mouse-ear cress).